Consider the following 518-residue polypeptide: GMP synthase [glutamine-hydrolyzing] (518 aa).

One can recognise a Glutamine amidotransferase type-1 domain in the interval 11 to 203 (KIIVLDFGSQ…AFDVCQARSN (193 aa)). Cysteine 88 functions as the Nucleophile in the catalytic mechanism. Catalysis depends on residues histidine 177 and glutamate 179. The 190-residue stretch at 204 to 393 (WSMDDFIDMQ…LGMPHELVWR (190 aa)) folds into the GMPS ATP-PPase domain. An ATP-binding site is contributed by 231 to 237 (SGGVDSS).

Homodimer.

It carries out the reaction XMP + L-glutamine + ATP + H2O = GMP + L-glutamate + AMP + diphosphate + 2 H(+). Its pathway is purine metabolism; GMP biosynthesis; GMP from XMP (L-Gln route): step 1/1. In terms of biological role, catalyzes the synthesis of GMP from XMP. This Ligilactobacillus salivarius (strain UCC118) (Lactobacillus salivarius) protein is GMP synthase [glutamine-hydrolyzing].